Here is a 343-residue protein sequence, read N- to C-terminus: S-adenosylmethionine:tRNA ribosyltransferase-isomerase (343 aa).

This sequence belongs to the QueA family. In terms of assembly, monomer.

Its subcellular location is the cytoplasm. The enzyme catalyses 7-aminomethyl-7-carbaguanosine(34) in tRNA + S-adenosyl-L-methionine = epoxyqueuosine(34) in tRNA + adenine + L-methionine + 2 H(+). Its pathway is tRNA modification; tRNA-queuosine biosynthesis. Its function is as follows. Transfers and isomerizes the ribose moiety from AdoMet to the 7-aminomethyl group of 7-deazaguanine (preQ1-tRNA) to give epoxyqueuosine (oQ-tRNA). This Geotalea uraniireducens (strain Rf4) (Geobacter uraniireducens) protein is S-adenosylmethionine:tRNA ribosyltransferase-isomerase.